Here is a 254-residue protein sequence, read N- to C-terminus: MILSSDHHQNDLSSLLPKHVAIIMDGNGRWAKKRGKLRAFGHRAGIKAVRSAVSFSAKHNIESLTLYAFSSENWNRPEQEVSSLMELFIFALDSEIKSLHKHNIRLSVIGDIGRFSERLQDRIHRSVKLTANNTGLQLNIAANYGGRWDIVQSVQKIAQQIKDNSLEQQDITEELVNNYMNLSQQPQVDLVIRTGGEHRISNFLLWQIAYAEFYFTDILWPDFDENVFEGAINAFAKRERRFGGTIPDDADVGS.

The active site involves aspartate 25. Aspartate 25 is a binding site for Mg(2+). Substrate contacts are provided by residues 26 to 29 (GNGR), tryptophan 30, arginine 38, histidine 42, and 70 to 72 (SSE). Asparagine 73 functions as the Proton acceptor in the catalytic mechanism. Residues tryptophan 74, arginine 76, and arginine 193 each coordinate substrate. Histidine 198 contacts Mg(2+). 199 to 201 (RIS) serves as a coordination point for substrate. Glutamate 212 is a Mg(2+) binding site.

This sequence belongs to the UPP synthase family. Homodimer. Mg(2+) is required as a cofactor.

It carries out the reaction 8 isopentenyl diphosphate + (2E,6E)-farnesyl diphosphate = di-trans,octa-cis-undecaprenyl diphosphate + 8 diphosphate. Its function is as follows. Catalyzes the sequential condensation of isopentenyl diphosphate (IPP) with (2E,6E)-farnesyl diphosphate (E,E-FPP) to yield (2Z,6Z,10Z,14Z,18Z,22Z,26Z,30Z,34E,38E)-undecaprenyl diphosphate (di-trans,octa-cis-UPP). UPP is the precursor of glycosyl carrier lipid in the biosynthesis of bacterial cell wall polysaccharide components such as peptidoglycan and lipopolysaccharide. This chain is Ditrans,polycis-undecaprenyl-diphosphate synthase ((2E,6E)-farnesyl-diphosphate specific), found in Photorhabdus laumondii subsp. laumondii (strain DSM 15139 / CIP 105565 / TT01) (Photorhabdus luminescens subsp. laumondii).